Reading from the N-terminus, the 474-residue chain is Protein nucleotidyltransferase YdiU (474 aa).

Residues Gly89, Gly91, Arg92, Lys112, Asp124, Gly125, Arg175, and Arg182 each coordinate ATP. Asp256 serves as the catalytic Proton acceptor. Mg(2+) contacts are provided by Asn257 and Asp266. Position 266 (Asp266) interacts with ATP.

It belongs to the SELO family. Mg(2+) serves as cofactor. The cofactor is Mn(2+).

The catalysed reaction is L-seryl-[protein] + ATP = 3-O-(5'-adenylyl)-L-seryl-[protein] + diphosphate. The enzyme catalyses L-threonyl-[protein] + ATP = 3-O-(5'-adenylyl)-L-threonyl-[protein] + diphosphate. It carries out the reaction L-tyrosyl-[protein] + ATP = O-(5'-adenylyl)-L-tyrosyl-[protein] + diphosphate. It catalyses the reaction L-histidyl-[protein] + UTP = N(tele)-(5'-uridylyl)-L-histidyl-[protein] + diphosphate. The catalysed reaction is L-seryl-[protein] + UTP = O-(5'-uridylyl)-L-seryl-[protein] + diphosphate. The enzyme catalyses L-tyrosyl-[protein] + UTP = O-(5'-uridylyl)-L-tyrosyl-[protein] + diphosphate. Nucleotidyltransferase involved in the post-translational modification of proteins. It can catalyze the addition of adenosine monophosphate (AMP) or uridine monophosphate (UMP) to a protein, resulting in modifications known as AMPylation and UMPylation. This is Protein nucleotidyltransferase YdiU from Corynebacterium glutamicum (strain R).